Here is a 249-residue protein sequence, read N- to C-terminus: RNA-free ribonuclease P (249 aa).

Residues Asn226 to Ile249 form a disordered region. Basic and acidic residues predominate over residues Tyr232–Ser242.

The protein belongs to the HARP family.

The enzyme catalyses Endonucleolytic cleavage of RNA, removing 5'-extranucleotides from tRNA precursor.. Its function is as follows. RNA-free RNase P that catalyzes the removal of the 5'-leader sequence from pre-tRNA to produce the mature 5'-terminus. This is RNA-free ribonuclease P from Methanosarcina barkeri (strain Fusaro / DSM 804).